Reading from the N-terminus, the 348-residue chain is Quinolinate synthase (348 aa).

Iminosuccinate contacts are provided by histidine 47 and serine 68. Cysteine 113 is a binding site for [4Fe-4S] cluster. Residues 139–141 (YAN) and serine 156 each bind iminosuccinate. Cysteine 200 contacts [4Fe-4S] cluster. Iminosuccinate-binding positions include 226 to 228 (HPE) and threonine 243. Cysteine 297 serves as a coordination point for [4Fe-4S] cluster.

The protein belongs to the quinolinate synthase family. Type 1 subfamily. [4Fe-4S] cluster is required as a cofactor.

It localises to the cytoplasm. It carries out the reaction iminosuccinate + dihydroxyacetone phosphate = quinolinate + phosphate + 2 H2O + H(+). It participates in cofactor biosynthesis; NAD(+) biosynthesis; quinolinate from iminoaspartate: step 1/1. Its function is as follows. Catalyzes the condensation of iminoaspartate with dihydroxyacetone phosphate to form quinolinate. This is Quinolinate synthase from Sodalis glossinidius (strain morsitans).